The sequence spans 123 residues: uncharacterized protein (123 aa).

This is an uncharacterized protein from Homo sapiens (Human).